A 484-amino-acid chain; its full sequence is NADH-ubiquinone oxidoreductase chain 4 (484 aa).

Transmembrane regions (helical) follow at residues 1–21 (MLTLLLIIPLVGALMLAPMQG), 33–53 (LALGTSLINFVLSIVLWGEFD), 77–97 (VDGISLYFVLLTTFITPICIL), 109–129 (YFLMCFLVLETLLIAVFVVLD), 130–150 (ILLFYVFFESVLIPLFLIVGI), 162–182 (FLLFLYTLFGSLFMLLAFLVI), 206–226 (LLWLAVFISMAIKTPLLPFHV), 236–256 (PLAGSVILAGLILKLATYGYM), 270–290 (FSPLVQTIAVITLIYASLATL), 295–315 (FKALVAYSSIGHMAVVVLGLF), 326–346 (LLLSIAHGVVSPALFILVGGV), 365–385 (YMPLFSIMFFVFTIFNAAVPL), 405–425 (VFAVLGSTGIVLSAAYSIWLY), and 448–468 (FMLLLPLLFVAVVFGIFPNII).

The protein belongs to the complex I subunit 4 family.

It is found in the mitochondrion inner membrane. The enzyme catalyses a ubiquinone + NADH + 5 H(+)(in) = a ubiquinol + NAD(+) + 4 H(+)(out). Core subunit of the mitochondrial membrane respiratory chain NADH dehydrogenase (Complex I) that is believed to belong to the minimal assembly required for catalysis. Complex I functions in the transfer of electrons from NADH to the respiratory chain. The immediate electron acceptor for the enzyme is believed to be ubiquinone. This Mycosarcoma maydis (Corn smut fungus) protein is NADH-ubiquinone oxidoreductase chain 4 (ND4).